We begin with the raw amino-acid sequence, 422 residues long: Steroid hormone receptor ERR1 (422 aa).

A disordered region spans residues 1–66 (MSSQVVGIEP…EGAGSGEQGS (66 aa)). The interval 1 to 76 (MSSQVVGIEP…GKLVLSSLPK (76 aa)) is repressor domain. A Glycyl lysine isopeptide (Lys-Gly) (interchain with G-Cter in SUMO) cross-link involves residue lysine 14. Serine 19 and serine 22 each carry phosphoserine. Residues 76–151 (KRLCLVCGDV…VGMLKEGVRL (76 aa)) constitute a DNA-binding region (nuclear receptor). 2 NR C4-type zinc fingers span residues 79–99 (CLVC…CEAC) and 115–134 (CPAS…CQAC). 4 positions are modified to N6-acetyllysine; by PCAF/KAT2B: lysine 129, lysine 138, lysine 160, and lysine 162. A Glycyl lysine isopeptide (Lys-Gly) (interchain with G-Cter in SUMO2) cross-link involves residue lysine 189. Residues 192-420 (PVNALVSHLL…KLFLEMLEAM (229 aa)) enclose the NR LBD domain. Residue lysine 402 forms a Glycyl lysine isopeptide (Lys-Gly) (interchain with G-Cter in SUMO); alternate linkage. A Glycyl lysine isopeptide (Lys-Gly) (interchain with G-Cter in SUMO2); alternate cross-link involves residue lysine 402. The segment at 402–422 (KLEGKVPMHKLFLEMLEAMMD) is AF-2 domain.

This sequence belongs to the nuclear hormone receptor family. NR3 subfamily. In terms of assembly, binds DNA as a monomer or a homodimer. Interacts (via the AF2 domain) with coactivator PPARGC1A (via the L3 motif); the interaction greatly enhances transcriptional activity of genes involved in energy metabolism. Interacts with PIAS4; the interaction enhances sumoylation. Interacts with MAPK15; promotes re-localization of ESRRA to the cytoplasm through a XPO1-dependent mechanism then inhibits ESRRA transcriptional activity. Post-translationally, phosphorylation on Ser-19 enhances sumoylation on Lys-14 increasing repression of transcriptional activity. Sumoylated with SUMO2. Main site is Lys-14 which is enhanced by phosphorylation on Ser-19, cofactor activation, and by interaction with PIAS4. Sumoylation enhances repression of transcriptional activity, but has no effect on subcellular location nor on DNA binding. In terms of processing, reversibly acetylated. Acetylation by PCAF/KAT2 at Lys-129, Lys-138, Lys-160 and Lys-162 and PCAF/KAT2 decreases transcriptional activity probably by inhibiting DNA-binding activity; deacetylation involves SIRT1 and HDAC8 and increases DNA-binding. Most highly expressed in kidney, heart, and brown adipocytes. Also found in uterus, cervix and vagina.

The protein resides in the nucleus. Its subcellular location is the cytoplasm. Binds to an ERR-alpha response element (ERRE) containing a single consensus half-site, 5'-TNAAGGTCA-3'. Can bind to the medium-chain acyl coenzyme A dehydrogenase (MCAD) response element NRRE-1 and may act as an important regulator of MCAD promoter. Binds to the C1 region of the lactoferrin gene promoter. Requires dimerization and the coactivator, PGC-1A, for full activity. The ERRalpha/PGC1alpha complex is a regulator of energy metabolism. Induces the expression of PERM1 in the skeletal muscle. The protein is Steroid hormone receptor ERR1 (Esrra) of Mus musculus (Mouse).